Reading from the N-terminus, the 246-residue chain is Transcription factor A, mitochondrial (246 aa).

The N-terminal 42 residues, Met1–Phe42, are a transit peptide targeting the mitochondrion. The segment at residues Pro50–Lys118 is a DNA-binding region (HMG box 1). A phosphoserine; by PKA mark is found at Ser55, Ser56, and Ser61. A Phosphothreonine modification is found at Thr122. The HMG box 2 DNA-binding region spans Pro155–Glu219. The residue at position 160 (Ser160) is a Phosphoserine; by PKA. 2 positions are modified to phosphoserine: Ser193 and Ser195.

As to quaternary structure, monomer; binds DNA as a monomer. Homodimer. Component of the mitochondrial transcription initiation complex, composed at least of TFB2M, TFAM and POLRMT. In this complex TFAM recruits POLRMT to the promoter whereas TFB2M induces structural changes in POLRMT to enable promoter opening and trapping of the DNA non-template strand. Upon metabolic stress, forms a complex composed of FOXO3, SIRT3, TFAM and POLRMT. Interacts with TFB1M and TFB2M. Interacts with CLPX; this enhances DNA-binding. Post-translationally, phosphorylation by PKA within the HMG box 1 impairs DNA binding and promotes degradation by the AAA+ Lon protease.

It localises to the mitochondrion. The protein localises to the mitochondrion matrix. The protein resides in the mitochondrion nucleoid. In terms of biological role, binds to the mitochondrial light strand promoter and functions in mitochondrial transcription regulation. Component of the mitochondrial transcription initiation complex, composed at least of TFB2M, TFAM and POLRMT that is required for basal transcription of mitochondrial DNA. In this complex, TFAM recruits POLRMT to a specific promoter whereas TFB2M induces structural changes in POLRMT to enable promoter opening and trapping of the DNA non-template strand. Required for accurate and efficient promoter recognition by the mitochondrial RNA polymerase. Promotes transcription initiation from the HSP1 and the light strand promoter by binding immediately upstream of transcriptional start sites. Is able to unwind DNA. Bends the mitochondrial light strand promoter DNA into a U-turn shape via its HMG boxes. Required for maintenance of normal levels of mitochondrial DNA. May play a role in organizing and compacting mitochondrial DNA. The sequence is that of Transcription factor A, mitochondrial from Homo sapiens (Human).